Reading from the N-terminus, the 1813-residue chain is Latent-transforming growth factor beta-binding protein 2 (1813 aa).

The first 35 residues, 1 to 35 (MRAPTTARCSGCIQRVRWRGFLPLVLAVLMGTSHA), serve as a signal peptide directing secretion. The interval 94-115 (NPGWLAEAEARRPPRTQQLRRV) is heparin-binding. Positions 103 to 152 (ARRPPRTQQLRRVQPPVQTRRSHPRGQQQIAARAAPSVARLETPQRPAAA) are disordered. The span at 108-132 (RTQQLRRVQPPVQTRRSHPRGQQQI) shows a compositional bias: polar residues. Asn175 carries N-linked (GlcNAc...) asparagine glycosylation. Residues 181-213 (IKPVCQPPCQNRGSCSRPQVCICRSGFRGARCE) form the EGF-like 1 domain. 3 cysteine pairs are disulfide-bonded: Cys185/Cys195, Cys189/Cys201, and Cys203/Cys212. The interval 220–305 (EFDPQNARPV…QLMSNALPSG (86 aa)) is disordered. A heparin-binding region spans residues 226–243 (ARPVPRRSVERAPGPHRS). A compositionally biased stretch (pro residues) spans 257–266 (LVPPPSPPPS). The span at 293–302 (ANGQLMSNAL) shows a compositional bias: polar residues. A glycan (N-linked (GlcNAc...) asparagine) is linked at Asn328. 329–339 (LTEKIKKIKVV) is a heparin binding site. Residues 381–413 (RIYFCQIPCLNGGRCIGRDECWCPANSTGKFCH) form the EGF-like 2 domain. 3 disulfides stabilise this stretch: Cys385–Cys395, Cys389–Cys401, and Cys403–Cys412. The N-linked (GlcNAc...) asparagine glycan is linked to Asn406. At Ser491 the chain carries Phosphoserine. The disordered stretch occupies residues 492–524 (VETRASHRPHGNLGHSPWASNSIPARAGEAPRP). In terms of domain architecture, TB 1 spans 536 to 588 (GQCYLSTVNGQCANPLGSLTSQEDCCGSVGTFWGVTSCAPCPPRQEGPAFPVI). 3 disulfide bridges follow: Cys538–Cys560, Cys547–Cys573, and Cys561–Cys576. Asn603 carries N-linked (GlcNAc...) asparagine glycosylation. The 41-residue stretch at 609–649 (DINECLTLGLCKDSECVNTRGSYLCTCRPGLMLDPSRSRCV) folds into the EGF-like 3; calcium-binding domain. 7 disulfides stabilise this stretch: Cys613–Cys624, Cys619–Cys633, Cys635–Cys648, Cys661–Cys683, Cys670–Cys696, Cys684–Cys699, and Cys685–Cys711. In terms of domain architecture, TB 2 spans 659-711 (GLCYRSLGSGTCTLPLVHRITKQICCCSRVGKAWGSTCEQCPLPGTEAFREIC). 2 disordered regions span residues 730 to 761 (KAEE…QPLR) and 787 to 819 (SAPH…PAEE). Residues 835-877 (DFDPCFAGASNICGPGTCVSLPNGYRCVCSPGYQLHPSQDYCT) form the EGF-like 4 domain. Cystine bridges form between Cys839–Cys852, Cys847–Cys861, Cys863–Cys876, Cys882–Cys893, Cys887–Cys902, Cys904–Cys919, Cys925–Cys936, Cys931–Cys945, Cys947–Cys959, Cys965–Cys976, Cys971–Cys985, Cys988–Cys999, Cys1005–Cys1016, Cys1011–Cys1025, Cys1027–Cys1040, Cys1046–Cys1057, Cys1052–Cys1066, Cys1069–Cys1082, Cys1088–Cys1099, Cys1094–Cys1108, Cys1111–Cys1124, Cys1130–Cys1142, Cys1137–Cys1151, Cys1153–Cys1165, Cys1171–Cys1183, Cys1177–Cys1192, Cys1194–Cys1207, Cys1213–Cys1224, Cys1219–Cys1233, Cys1235–Cys1249, Cys1255–Cys1268, Cys1263–Cys1277, Cys1281–Cys1293, Cys1299–Cys1311, Cys1305–Cys1320, Cys1322–Cys1335, Cys1341–Cys1353, Cys1348–Cys1362, Cys1364–Cys1378, Cys1405–Cys1428, Cys1415–Cys1440, Cys1429–Cys1443, Cys1430–Cys1455, Cys1481–Cys1494, Cys1489–Cys1503, Cys1505–Cys1518, Cys1524–Cys1534, Cys1529–Cys1543, and Cys1545–Cys1558. The 43-residue stretch at 878–920 (DDNECMRNPCEGRGRCVNSVGSYSCLCYPGYTLVTLGDTQECQ) folds into the EGF-like 5; calcium-binding domain. The EGF-like 6; calcium-binding domain maps to 921 to 960 (DIDECEQPGVCSGGRCSNTEGSYHCECDRGYIMVRKGHCQ). The EGF-like 7; calcium-binding domain maps to 961 to 1000 (DINECRHPGTCPDGRCVNSPGSYTCLACEEGYVGQSGSCV). The region spanning 1001–1041 (DVNECLTPGICTHGRCINMEGSFRCSCEPGYEVTPDKKGCR) is the EGF-like 8; calcium-binding domain. Residues 1042–1083 (DVDECASRASCPTGLCLNTEGSFTCSACQSGYWVNEDGTACE) enclose the EGF-like 9; calcium-binding domain. In terms of domain architecture, EGF-like 10; calcium-binding spans 1084-1125 (DLDECAFPGVCPTGVCTNTVGSFSCKDCDQGYRPNPLGNRCE). One can recognise an EGF-like 11; calcium-binding domain in the interval 1126 to 1166 (DVDECEGPQSSCRGGECKNTEGSYQCLCHQGFQLVNGTMCE). Asn1161 carries N-linked (GlcNAc...) asparagine glycosylation. One can recognise an EGF-like 12; calcium-binding domain in the interval 1167 to 1208 (DVNECVGEEHCAPHGECLNSLGSFFCLCAPGFASAEGGTRCQ). In terms of domain architecture, EGF-like 13; calcium-binding spans 1209–1250 (DVDECAATDPCPGGHCVNTEGSFSCLCETASFQPSPDSGECL). The EGF-like 14; calcium-binding domain occupies 1251 to 1294 (DIDECEDREDPVCGAWRCENSPGSYRCILDCQPGFYVAPNGDCI). The region spanning 1295–1336 (DIDECANDTVCGNHGFCDNTDGSFRCLCDQGFETSPSGWECV) is the EGF-like 15; calcium-binding domain. N-linked (GlcNAc...) asparagine glycosylation is present at Asn1301. One can recognise an EGF-like 16; calcium-binding domain in the interval 1337 to 1379 (DVNECELMMAVCGDALCENVEGSFLCLCASDLEEYDAEEGHCR). The TB 3 domain occupies 1403–1455 (MECYSEHNGGPPCSQILGQNSTQAECCCTQGARWGKACAPCPSEDSVEFSQLC). Residue Asn1422 is glycosylated (N-linked (GlcNAc...) asparagine). An EGF-like 17; calcium-binding domain is found at 1477–1519 (DADECVLFGPALCQNGRCSNIVPGYICLCNPGYHYDASSRKCQ). The EGF-like 18; calcium-binding domain maps to 1520-1559 (DHNECQDLACENGECVNQEGSFHCLCNPPLTLDLSGQRCV). Asn1560 is a glycosylation site (N-linked (GlcNAc...) asparagine). In terms of domain architecture, TB 4 spans 1576–1628 (DICWKKVTNDVCSQPLRGHHTTYTECCCQDGEAWSQQCALCPPRSSEVYAQLC). 4 disulfide bridges follow: Cys1578-Cys1601, Cys1587-Cys1613, Cys1602-Cys1616, and Cys1603-Cys1628. Residues 1631 to 1813 (ARIEAERGAG…PGPPHCAAKE (183 aa)) are C-terminal domain. The segment at 1671–1717 (YLGPEDTAPEPPFSNPASQPGDNTPVLEPPLQPSELQPHYLASHSEP) is disordered. The EGF-like 19; calcium-binding domain occupies 1725–1765 (QAEECGILNGCENGRCVRVREGYTCDCFEGFQLDAPTLACV). Cystine bridges form between Cys1729-Cys1740, Cys1735-Cys1749, Cys1751-Cys1764, Cys1770-Cys1785, Cys1780-Cys1794, and Cys1796-Cys1809. The 45-residue stretch at 1766–1810 (DVNECEDLNGPARLCAHGHCENTEGSYRCHCSPGYVAEPGPPHCA) folds into the EGF-like 20; calcium-binding domain.

This sequence belongs to the LTBP family. In terms of assembly, forms part of the large latent transforming growth factor beta precursor complex; removal is essential for activation of complex. Interacts with SDC4. Interacts (via C-terminal domain) with FBN1 (via N-terminal domain) in a Ca(+2)-dependent manner. Post-translationally, N-Glycosylated. Contains hydroxylated asparagine residues. In terms of tissue distribution, expressed in the anterior chamber of the eye.

Its subcellular location is the secreted. The protein localises to the extracellular space. It is found in the extracellular matrix. In terms of biological role, may play an integral structural role in elastic-fiber architectural organization and/or assembly. In Mus musculus (Mouse), this protein is Latent-transforming growth factor beta-binding protein 2 (Ltbp2).